Consider the following 532-residue polypeptide: Bifunctional purine biosynthesis protein PurH (532 aa).

Residues 1 to 147 enclose the MGS-like domain; the sequence is MAKIKRALIS…KNYRSVTVVT (147 aa).

This sequence belongs to the PurH family.

It catalyses the reaction (6R)-10-formyltetrahydrofolate + 5-amino-1-(5-phospho-beta-D-ribosyl)imidazole-4-carboxamide = 5-formamido-1-(5-phospho-D-ribosyl)imidazole-4-carboxamide + (6S)-5,6,7,8-tetrahydrofolate. The catalysed reaction is IMP + H2O = 5-formamido-1-(5-phospho-D-ribosyl)imidazole-4-carboxamide. It participates in purine metabolism; IMP biosynthesis via de novo pathway; 5-formamido-1-(5-phospho-D-ribosyl)imidazole-4-carboxamide from 5-amino-1-(5-phospho-D-ribosyl)imidazole-4-carboxamide (10-formyl THF route): step 1/1. Its pathway is purine metabolism; IMP biosynthesis via de novo pathway; IMP from 5-formamido-1-(5-phospho-D-ribosyl)imidazole-4-carboxamide: step 1/1. This Magnetococcus marinus (strain ATCC BAA-1437 / JCM 17883 / MC-1) protein is Bifunctional purine biosynthesis protein PurH.